Consider the following 392-residue polypeptide: Large ribosomal subunit protein uL3 (392 aa).

It belongs to the universal ribosomal protein uL3 family. As to quaternary structure, component of the large ribosomal subunit (LSU). Mature N.crassa ribosomes consist of a small (40S) and a large (60S) subunit. The 40S small subunit contains 1 molecule of ribosomal RNA (18S rRNA) and at least 32 different proteins. The large 60S subunit contains 3 rRNA molecules (26S, 5.8S and 5S rRNA) and at least 42 different proteins.

Its subcellular location is the cytoplasm. Functionally, component of the ribosome, a large ribonucleoprotein complex responsible for the synthesis of proteins in the cell. The small ribosomal subunit (SSU) binds messenger RNAs (mRNAs) and translates the encoded message by selecting cognate aminoacyl-transfer RNA (tRNA) molecules. The large subunit (LSU) contains the ribosomal catalytic site termed the peptidyl transferase center (PTC), which catalyzes the formation of peptide bonds, thereby polymerizing the amino acids delivered by tRNAs into a polypeptide chain. The nascent polypeptides leave the ribosome through a tunnel in the LSU and interact with protein factors that function in enzymatic processing, targeting, and the membrane insertion of nascent chains at the exit of the ribosomal tunnel. This Neurospora crassa (strain ATCC 24698 / 74-OR23-1A / CBS 708.71 / DSM 1257 / FGSC 987) protein is Large ribosomal subunit protein uL3 (rpl-3).